A 105-amino-acid chain; its full sequence is Small ribosomal subunit protein uS10 (105 aa).

Belongs to the universal ribosomal protein uS10 family. In terms of assembly, part of the 30S ribosomal subunit.

In terms of biological role, involved in the binding of tRNA to the ribosomes. In Agathobacter rectalis (strain ATCC 33656 / DSM 3377 / JCM 17463 / KCTC 5835 / VPI 0990) (Eubacterium rectale), this protein is Small ribosomal subunit protein uS10.